The sequence spans 277 residues: Shikimate dehydrogenase (NADP(+)) (277 aa).

Residues 20 to 22 (SLS) and T67 each bind shikimate. The Proton acceptor role is filled by K71. D83 contributes to the NADP(+) binding site. Positions 92 and 107 each coordinate shikimate. NADP(+) contacts are provided by residues 131–135 (GAGGV) and I219. Position 221 (Y221) interacts with shikimate. G242 lines the NADP(+) pocket.

It belongs to the shikimate dehydrogenase family. In terms of assembly, homodimer.

It catalyses the reaction shikimate + NADP(+) = 3-dehydroshikimate + NADPH + H(+). It participates in metabolic intermediate biosynthesis; chorismate biosynthesis; chorismate from D-erythrose 4-phosphate and phosphoenolpyruvate: step 4/7. Its function is as follows. Involved in the biosynthesis of the chorismate, which leads to the biosynthesis of aromatic amino acids. Catalyzes the reversible NADPH linked reduction of 3-dehydroshikimate (DHSA) to yield shikimate (SA). The protein is Shikimate dehydrogenase (NADP(+)) of Pelobacter propionicus (strain DSM 2379 / NBRC 103807 / OttBd1).